We begin with the raw amino-acid sequence, 510 residues long: MKHQLVIVVDFGGQYNQLIARRVRDLNVYCEVVPYKKALDVIKEKQPIGIIFTGGPNSVYEENSPQIEKEIFELNIPILGMCYGMQLISKDFGGVVEKAKNREFGKTNAKISNQSSILKGMSDESIVWMSHTDFVSEKPEGFDIIQTTDSCPVAAIANEDKKIFAVQYHPEVNHTVEGKTLIKNFLYEICKADGDWTMENFLEEQIQKIRKTVGDKKVLLALSGGVDSSVCAALLSRAIGKNLTCVFVDHGLMRKNEGDEVEAAFKNDELNFVRVNAKDRFLNKLKGVSDPEQKRKIIGEEFIRVFEDEAKKIGSVDFLAQGTIYPDVIESGQGDASVIKSHHNVGGLPDVVDFKDLIEPLRDLFKDEVRRLGLELEMPEYLVYRQPFPGPGLGIRVMGEITEEKLEVLREADFIFRDEVAKAGIDKDINQYFAVITNNRTVGVMGDFRTYDYTLALRAVTTTDFMTADWARIPYEVLDKTSVRIINEVDHINRIVYDITSKPPATIEWE.

A Glutamine amidotransferase type-1 domain is found at 5–195 (LVIVVDFGGQ…LYEICKADGD (191 aa)). Cys-82 serves as the catalytic Nucleophile. Catalysis depends on residues His-169 and Glu-171. The GMPS ATP-PPase domain occupies 196 to 385 (WTMENFLEEQ…LEMPEYLVYR (190 aa)). Position 223-229 (223-229 (SGGVDSS)) interacts with ATP.

In terms of assembly, homodimer.

It catalyses the reaction XMP + L-glutamine + ATP + H2O = GMP + L-glutamate + AMP + diphosphate + 2 H(+). The protein operates within purine metabolism; GMP biosynthesis; GMP from XMP (L-Gln route): step 1/1. In terms of biological role, catalyzes the synthesis of GMP from XMP. The sequence is that of GMP synthase [glutamine-hydrolyzing] from Finegoldia magna (strain ATCC 29328 / DSM 20472 / WAL 2508) (Peptostreptococcus magnus).